Consider the following 198-residue polypeptide: NADH-quinone oxidoreductase subunit C (198 aa).

Belongs to the complex I 30 kDa subunit family. NDH-1 is composed of 14 different subunits. Subunits NuoB, C, D, E, F, and G constitute the peripheral sector of the complex.

The protein resides in the cell inner membrane. The catalysed reaction is a quinone + NADH + 5 H(+)(in) = a quinol + NAD(+) + 4 H(+)(out). In terms of biological role, NDH-1 shuttles electrons from NADH, via FMN and iron-sulfur (Fe-S) centers, to quinones in the respiratory chain. The immediate electron acceptor for the enzyme in this species is believed to be ubiquinone. Couples the redox reaction to proton translocation (for every two electrons transferred, four hydrogen ions are translocated across the cytoplasmic membrane), and thus conserves the redox energy in a proton gradient. The sequence is that of NADH-quinone oxidoreductase subunit C from Herminiimonas arsenicoxydans.